Consider the following 215-residue polypeptide: ATP phosphoribosyltransferase (215 aa).

It belongs to the ATP phosphoribosyltransferase family. Short subfamily. In terms of assembly, heteromultimer composed of HisG and HisZ subunits.

The protein localises to the cytoplasm. It catalyses the reaction 1-(5-phospho-beta-D-ribosyl)-ATP + diphosphate = 5-phospho-alpha-D-ribose 1-diphosphate + ATP. It participates in amino-acid biosynthesis; L-histidine biosynthesis; L-histidine from 5-phospho-alpha-D-ribose 1-diphosphate: step 1/9. Functionally, catalyzes the condensation of ATP and 5-phosphoribose 1-diphosphate to form N'-(5'-phosphoribosyl)-ATP (PR-ATP). Has a crucial role in the pathway because the rate of histidine biosynthesis seems to be controlled primarily by regulation of HisG enzymatic activity. This is ATP phosphoribosyltransferase from Acidithiobacillus ferrooxidans (strain ATCC 23270 / DSM 14882 / CIP 104768 / NCIMB 8455) (Ferrobacillus ferrooxidans (strain ATCC 23270)).